Reading from the N-terminus, the 328-residue chain is uncharacterized protein (328 aa).

Residues Met-1 to Ala-25 form the signal peptide.

It belongs to the bacterial solute-binding protein 7 family.

The protein resides in the periplasm. This is an uncharacterized protein from Haemophilus influenzae (strain ATCC 51907 / DSM 11121 / KW20 / Rd).